The primary structure comprises 671 residues: DNA ligase (671 aa).

NAD(+) contacts are provided by residues 32 to 36 (DAEYD), 81 to 82 (SL), and E113. Residue K115 is the N6-AMP-lysine intermediate of the active site. 4 residues coordinate NAD(+): R136, E173, K290, and K314. C408, C411, C426, and C432 together coordinate Zn(2+). One can recognise a BRCT domain in the interval 593 to 671 (EIDSPFAGKT…EAEMIRLLGA (79 aa)).

It belongs to the NAD-dependent DNA ligase family. LigA subfamily. Mg(2+) serves as cofactor. Requires Mn(2+) as cofactor.

The catalysed reaction is NAD(+) + (deoxyribonucleotide)n-3'-hydroxyl + 5'-phospho-(deoxyribonucleotide)m = (deoxyribonucleotide)n+m + AMP + beta-nicotinamide D-nucleotide.. DNA ligase that catalyzes the formation of phosphodiester linkages between 5'-phosphoryl and 3'-hydroxyl groups in double-stranded DNA using NAD as a coenzyme and as the energy source for the reaction. It is essential for DNA replication and repair of damaged DNA. The protein is DNA ligase of Salmonella choleraesuis (strain SC-B67).